The chain runs to 376 residues: Alcohol dehydrogenase class-3 (376 aa).

Residues Cys47, His69, Cys99, Cys102, Cys105, Cys113, and Cys176 each contribute to the Zn(2+) site.

This sequence belongs to the zinc-containing alcohol dehydrogenase family. Class-III subfamily. In terms of assembly, homodimer. The cofactor is Zn(2+). In terms of tissue distribution, expressed in the skeletal muscle, heart, gill filaments and liver, with highest levels in the kidney.

The protein localises to the cytoplasm. It catalyses the reaction a primary alcohol + NAD(+) = an aldehyde + NADH + H(+). It carries out the reaction a secondary alcohol + NAD(+) = a ketone + NADH + H(+). The enzyme catalyses S-(hydroxymethyl)glutathione + NADP(+) = S-formylglutathione + NADPH + H(+). The catalysed reaction is S-(hydroxymethyl)glutathione + NAD(+) = S-formylglutathione + NADH + H(+). It catalyses the reaction S-nitrosoglutathione + NADH + H(+) = S-(hydroxysulfenamide)glutathione + NAD(+). Its function is as follows. Class-III ADH is remarkably ineffective in oxidizing ethanol, but it readily catalyzes the oxidation of long-chain primary alcohols and the oxidation of S-(hydroxymethyl) glutathione. Also acts as a S-nitroso-glutathione reductase by catalyzing the NADH-dependent reduction of S-nitrosoglutathione, thereby regulating protein S-nitrosylation. The sequence is that of Alcohol dehydrogenase class-3 from Sparus aurata (Gilthead sea bream).